We begin with the raw amino-acid sequence, 617 residues long: UvrABC system protein C (617 aa).

The 75-residue stretch at 11–85 folds into the GIY-YIG domain; it reads TTPGVYIFRK…IKQHRPHYNV (75 aa). The 36-residue stretch at 194–229 folds into the UVR domain; that stretch reads APVIARLKEDMKVAAQGQDFEQAARLRDRVQAVEKL.

The protein belongs to the UvrC family. In terms of assembly, interacts with UvrB in an incision complex.

The protein resides in the cytoplasm. Its function is as follows. The UvrABC repair system catalyzes the recognition and processing of DNA lesions. UvrC both incises the 5' and 3' sides of the lesion. The N-terminal half is responsible for the 3' incision and the C-terminal half is responsible for the 5' incision. The protein is UvrABC system protein C of Deinococcus radiodurans (strain ATCC 13939 / DSM 20539 / JCM 16871 / CCUG 27074 / LMG 4051 / NBRC 15346 / NCIMB 9279 / VKM B-1422 / R1).